The following is a 382-amino-acid chain: Queuine tRNA-ribosyltransferase (382 aa).

The active-site Proton acceptor is D94. Residues D94 to F98, D148, Q192, and G219 each bind substrate. An RNA binding region spans residues G250–D256. D269 acts as the Nucleophile in catalysis. Positions T274–R278 are RNA binding; important for wobble base 34 recognition. Zn(2+)-binding residues include C307, C309, C312, and H338.

Belongs to the queuine tRNA-ribosyltransferase family. Homodimer. Within each dimer, one monomer is responsible for RNA recognition and catalysis, while the other monomer binds to the replacement base PreQ1. The cofactor is Zn(2+).

The catalysed reaction is 7-aminomethyl-7-carbaguanine + guanosine(34) in tRNA = 7-aminomethyl-7-carbaguanosine(34) in tRNA + guanine. It functions in the pathway tRNA modification; tRNA-queuosine biosynthesis. Its function is as follows. Catalyzes the base-exchange of a guanine (G) residue with the queuine precursor 7-aminomethyl-7-deazaguanine (PreQ1) at position 34 (anticodon wobble position) in tRNAs with GU(N) anticodons (tRNA-Asp, -Asn, -His and -Tyr). Catalysis occurs through a double-displacement mechanism. The nucleophile active site attacks the C1' of nucleotide 34 to detach the guanine base from the RNA, forming a covalent enzyme-RNA intermediate. The proton acceptor active site deprotonates the incoming PreQ1, allowing a nucleophilic attack on the C1' of the ribose to form the product. After dissociation, two additional enzymatic reactions on the tRNA convert PreQ1 to queuine (Q), resulting in the hypermodified nucleoside queuosine (7-(((4,5-cis-dihydroxy-2-cyclopenten-1-yl)amino)methyl)-7-deazaguanosine). In Haemophilus ducreyi (strain 35000HP / ATCC 700724), this protein is Queuine tRNA-ribosyltransferase.